We begin with the raw amino-acid sequence, 156 residues long: Arginine repressor (156 aa).

The protein belongs to the ArgR family.

It localises to the cytoplasm. It participates in amino-acid biosynthesis; L-arginine biosynthesis [regulation]. In terms of biological role, regulates arginine biosynthesis genes. This Yersinia enterocolitica serotype O:8 / biotype 1B (strain NCTC 13174 / 8081) protein is Arginine repressor.